We begin with the raw amino-acid sequence, 384 residues long: NADH-ubiquinone oxidoreductase chain 5 (384 aa).

12 helical membrane-spanning segments follow: residues 12-32 (FYFL…FLLM), 50-70 (IVMT…VLLI), 92-112 (ILLV…PNLI), 113-133 (SILL…IYFQ), 153-173 (VALL…YIFY), 183-203 (MMII…QIPF), 215-235 (TPVS…YLLI), 244-264 (WWMA…AGLG), 274-293 (IIAL…LSMG), 298-320 (AFFH…GSII), 343-363 (CSCF…AGFY), and 364-384 (SKDL…SFFL).

It belongs to the complex I subunit 5 family.

Its subcellular location is the mitochondrion inner membrane. It catalyses the reaction a ubiquinone + NADH + 5 H(+)(in) = a ubiquinol + NAD(+) + 4 H(+)(out). Its function is as follows. Core subunit of the mitochondrial membrane respiratory chain NADH dehydrogenase (Complex I) that is believed to belong to the minimal assembly required for catalysis. Complex I functions in the transfer of electrons from NADH to the respiratory chain. The immediate electron acceptor for the enzyme is believed to be ubiquinone. In Anopheles arabiensis (Mosquito), this protein is NADH-ubiquinone oxidoreductase chain 5 (ND5).